The sequence spans 458 residues: RuvB-like protein 1 (458 aa).

73–80 (GPPGTGKT) serves as a coordination point for ATP.

It belongs to the RuvB family. In terms of assembly, interacts with FRI, and with FLX and FES1, two component of the transcription activator complex FRI-C. Interacts with the disease resistance genes RPM1 and RPP5.

The protein resides in the nucleus. The catalysed reaction is ATP + H2O = ADP + phosphate + H(+). Proposed core component of the chromatin remodeling INO80 complex which is involved in transcriptional regulation, DNA replication and probably DNA repair. Component of the NuA4 histone acetyltransferase complex which is involved in transcriptional activation of select genes principally by acetylation of nucleosomal histones H4 and H2A. Has single-stranded DNA-stimulated ATPase and ATP-dependent DNA helicase (3' to 5') activity suggesting a role in nuclear processes such as recombination and transcription. This Arabidopsis thaliana (Mouse-ear cress) protein is RuvB-like protein 1 (RIN1).